A 465-amino-acid polypeptide reads, in one-letter code: MASISSLGVGSGLDLSSILDSLTAAQKATLTPISNQQSSFTAKLSAYGTLKSALTTFQTANTALSKADLFSATSSTTAFSATTAGNAIAGKYTISVTHLAQAQTLTTRTTRDDTKTAIATSDSKLTIQQGGDKDPITIDISAANSSLSGIRDAINNAKAGVSASIINVGNGDYRLSVTSNDTGLDNAMTLSVSGDDALQSFMGYDASASSNGMEVSVAAQNAQLTVNNVAIENSSNTISDALENITLNLNDVTTGNQTLTITQDTSKAQTAIKDWVNAYNSLIDTFSSLTKYTAVDAGADSQSSSNGALLGDSTLRTIQTQLKSMLSNTVSSSSYKTLAQIGITTDPSDGKLELDADKLTAALKKDASGVGALIVGDGKKTGITTTIGSNLTSWLSTTGIIKAATDGVSKTLNKLTKDYNAASDRIDAQVARYKEQFTQLDVLMTSLNSTSSYLTQQFENNSNSK.

Residues 408 to 436 are a coiled coil; that stretch reads VSKTLNKLTKDYNAASDRIDAQVARYKEQ.

It belongs to the FliD family. Homopentamer.

Its subcellular location is the secreted. The protein localises to the bacterial flagellum. In terms of biological role, required for the morphogenesis and for the elongation of the flagellar filament by facilitating polymerization of the flagellin monomers at the tip of growing filament. Forms a capping structure, which prevents flagellin subunits (transported through the central channel of the flagellum) from leaking out without polymerization at the distal end. This is Flagellar hook-associated protein 2 (fliD) from Escherichia coli O157:H7.